The chain runs to 225 residues: UPF0758 protein Sfri_3828 (225 aa).

The region spanning 102-224 is the MPN domain; that stretch reads ILTNPDLTRD…IVSFAERGWI (123 aa). Residues His-173, His-175, and Asp-186 each coordinate Zn(2+). The JAMM motif signature appears at 173-186; it reads HNHPSGIAEPSQAD.

This sequence belongs to the UPF0758 family.

The sequence is that of UPF0758 protein Sfri_3828 from Shewanella frigidimarina (strain NCIMB 400).